A 430-amino-acid chain; its full sequence is Signal recognition particle receptor FtsY (430 aa).

The disordered stretch occupies residues 75 to 95 (DTGELPAVGDDATVPRDSPRH). Residues 238–245 (GVNGTGKT), 320–324 (DTAGR), and 382–385 (TKLD) each bind GTP.

It belongs to the GTP-binding SRP family. FtsY subfamily. Part of the signal recognition particle protein translocation system, which is composed of SRP and FtsY.

It is found in the cell membrane. The protein resides in the cytoplasm. It carries out the reaction GTP + H2O = GDP + phosphate + H(+). Functionally, involved in targeting and insertion of nascent membrane proteins into the cytoplasmic membrane. Acts as a receptor for the complex formed by the signal recognition particle (SRP) and the ribosome-nascent chain (RNC). This is Signal recognition particle receptor FtsY from Mycobacterium leprae (strain TN).